We begin with the raw amino-acid sequence, 84 residues long: Sulfur carrier protein TusA (84 aa).

Cys-19 acts as the Cysteine persulfide intermediate in catalysis.

It belongs to the sulfur carrier protein TusA family. In terms of assembly, interacts with IscS.

The protein resides in the cytoplasm. The protein operates within tRNA modification. In terms of biological role, sulfur carrier protein involved in sulfur trafficking in the cell. Part of a sulfur-relay system required for 2-thiolation during synthesis of 2-thiouridine of the modified wobble base 5-methylaminomethyl-2-thiouridine (mnm(5)s(2)U) in tRNA. Interacts with IscS and stimulates its cysteine desulfurase activity. Accepts an activated sulfur from IscS, which is then transferred to TusD, and thus determines the direction of sulfur flow from IscS to 2-thiouridine formation. Also appears to be involved in sulfur transfer for the biosynthesis of molybdopterin. This chain is Sulfur carrier protein TusA, found in Yersinia enterocolitica serotype O:8 / biotype 1B (strain NCTC 13174 / 8081).